The following is a 281-amino-acid chain: Acetyl-coenzyme A carboxylase carboxyl transferase subunit beta (281 aa).

The CoA carboxyltransferase N-terminal domain maps to 24-281 (GLWYKSPKGK…TKLLTMLANN (258 aa)).

The protein belongs to the AccD/PCCB family. In terms of assembly, acetyl-CoA carboxylase is a heterohexamer composed of biotin carboxyl carrier protein (AccB), biotin carboxylase (AccC) and two subunits each of ACCase subunit alpha (AccA) and ACCase subunit beta (AccD).

Its subcellular location is the cytoplasm. The enzyme catalyses N(6)-carboxybiotinyl-L-lysyl-[protein] + acetyl-CoA = N(6)-biotinyl-L-lysyl-[protein] + malonyl-CoA. It participates in lipid metabolism; malonyl-CoA biosynthesis; malonyl-CoA from acetyl-CoA: step 1/1. Component of the acetyl coenzyme A carboxylase (ACC) complex. Biotin carboxylase (BC) catalyzes the carboxylation of biotin on its carrier protein (BCCP) and then the CO(2) group is transferred by the transcarboxylase to acetyl-CoA to form malonyl-CoA. In Amoebophilus asiaticus (strain 5a2), this protein is Acetyl-coenzyme A carboxylase carboxyl transferase subunit beta.